The sequence spans 192 residues: uncharacterized protein (192 aa).

This sequence to A.aeolicus AQ_054.

This is an uncharacterized protein from Thermotoga maritima (strain ATCC 43589 / DSM 3109 / JCM 10099 / NBRC 100826 / MSB8).